Consider the following 194-residue polypeptide: Large ribosomal subunit protein eL15 (194 aa).

The segment at 162 to 194 (LTSAGRKSRGLRNKGKGAEKVRPSVRANKGKTK) is disordered. A compositionally biased stretch (basic residues) spans 167–176 (RKSRGLRNKG).

The protein belongs to the eukaryotic ribosomal protein eL15 family.

This Thermococcus onnurineus (strain NA1) protein is Large ribosomal subunit protein eL15.